The sequence spans 291 residues: N-acetylmannosamine kinase (291 aa).

ATP contacts are provided by residues Ala5–Lys12 and Gly132–Ser139. Residues His156, Cys166, Cys168, and Cys173 each coordinate Zn(2+).

This sequence belongs to the ROK (NagC/XylR) family. NanK subfamily. As to quaternary structure, homodimer.

It catalyses the reaction an N-acyl-D-mannosamine + ATP = an N-acyl-D-mannosamine 6-phosphate + ADP + H(+). The protein operates within amino-sugar metabolism; N-acetylneuraminate degradation; D-fructose 6-phosphate from N-acetylneuraminate: step 2/5. Catalyzes the phosphorylation of N-acetylmannosamine (ManNAc) to ManNAc-6-P. The chain is N-acetylmannosamine kinase from Escherichia coli O157:H7.